We begin with the raw amino-acid sequence, 1368 residues long: DNA-directed RNA polymerase subunit beta (1368 aa).

The protein belongs to the RNA polymerase beta chain family. The RNAP catalytic core consists of 2 alpha, 1 beta, 1 beta' and 1 omega subunit. When a sigma factor is associated with the core the holoenzyme is formed, which can initiate transcription.

It catalyses the reaction RNA(n) + a ribonucleoside 5'-triphosphate = RNA(n+1) + diphosphate. DNA-dependent RNA polymerase catalyzes the transcription of DNA into RNA using the four ribonucleoside triphosphates as substrates. In Janthinobacterium sp. (strain Marseille) (Minibacterium massiliensis), this protein is DNA-directed RNA polymerase subunit beta.